Here is a 565-residue protein sequence, read N- to C-terminus: Inositol-3-phosphate synthase (565 aa).

Positions 70, 71, 72, 73, 144, 180, 181, 191, 194, 231, 232, 233, 234, 282, 283, 307, 310, 341, 342, 343, 356, 394, 395, 423, and 424 each coordinate NAD(+). Serine 536 carries the phosphoserine modification. The tract at residues 546–565 (LHANGHSNGSAKLATNGNGH) is disordered. The span at 550–565 (GHSNGSAKLATNGNGH) shows a compositional bias: polar residues.

This sequence belongs to the myo-inositol 1-phosphate synthase family. NAD(+) is required as a cofactor. Higher expression in adult heads than bodies.

The protein localises to the cytoplasm. The catalysed reaction is D-glucose 6-phosphate = 1D-myo-inositol 3-phosphate. The protein operates within polyol metabolism; myo-inositol biosynthesis; myo-inositol from D-glucose 6-phosphate: step 1/2. In terms of biological role, key enzyme in myo-inositol biosynthesis pathway that catalyzes the conversion of glucose 6-phosphate to 1-myo-inositol 1-phosphate in a NAD-dependent manner. Rate-limiting enzyme in the synthesis of all inositol-containing compounds. This Drosophila melanogaster (Fruit fly) protein is Inositol-3-phosphate synthase (Inos).